Consider the following 457-residue polypeptide: UDP-N-acetylmuramate--L-alanine ligase (457 aa).

112-118 is an ATP binding site; that stretch reads GTHGKTT.

The protein belongs to the MurCDEF family.

It localises to the cytoplasm. It carries out the reaction UDP-N-acetyl-alpha-D-muramate + L-alanine + ATP = UDP-N-acetyl-alpha-D-muramoyl-L-alanine + ADP + phosphate + H(+). The protein operates within cell wall biogenesis; peptidoglycan biosynthesis. Cell wall formation. The protein is UDP-N-acetylmuramate--L-alanine ligase of Solidesulfovibrio magneticus (strain ATCC 700980 / DSM 13731 / RS-1) (Desulfovibrio magneticus).